Reading from the N-terminus, the 129-residue chain is Large ribosomal subunit protein eL31 (129 aa).

A disordered region spans residues Met1–Glu46. Basic and acidic residues-rich tracts occupy residues Lys9–Lys27 and Thr35–Glu46.

The protein belongs to the eukaryotic ribosomal protein eL31 family.

The protein is Large ribosomal subunit protein eL31 (rpl31e) of Sulfolobus acidocaldarius (strain ATCC 33909 / DSM 639 / JCM 8929 / NBRC 15157 / NCIMB 11770).